A 173-amino-acid polypeptide reads, in one-letter code: Large ribosomal subunit protein uL14mz (173 aa).

Residues 1-61 (MAAAFASRLT…TVLKVVDNSG (61 aa)) constitute a mitochondrion transit peptide.

Belongs to the universal ribosomal protein uL14 family. As to quaternary structure, part of the mitochondrial 50S ribosomal subunit. Mostly expressed in leaves and inflorescences, including floral organs and meristems, and, to a lower extent, in pistils.

It localises to the mitochondrion. Binds to 23S rRNA in mitochondrion. The protein is Large ribosomal subunit protein uL14mz (HLP) of Arabidopsis thaliana (Mouse-ear cress).